The chain runs to 312 residues: tRNA uridine(34) hydroxylase (312 aa).

Residues 124-218 enclose the Rhodanese domain; sequence SDPEVLLIDT…YLEEVPQEQT (95 aa). Cys-178 (cysteine persulfide intermediate) is an active-site residue. Composition is skewed to basic and acidic residues over residues 279 to 294 and 302 to 312; these read TRES…ELAR and IGRDPRQLNEA. The segment at 279 to 312 is disordered; that stretch reads TRESARERQKQIELARARNQPHPIGRDPRQLNEA.

Belongs to the TrhO family.

The enzyme catalyses uridine(34) in tRNA + AH2 + O2 = 5-hydroxyuridine(34) in tRNA + A + H2O. Functionally, catalyzes oxygen-dependent 5-hydroxyuridine (ho5U) modification at position 34 in tRNAs. This Ectopseudomonas mendocina (strain ymp) (Pseudomonas mendocina) protein is tRNA uridine(34) hydroxylase.